The primary structure comprises 340 residues: Quinic acid degradation cluster protein x (340 aa).

Positions 90, 115, 117, 118, and 262 each coordinate Mg(2+). Glu-90 serves as a coordination point for substrate. Substrate is bound by residues 117-120 (LDGT) and Asp-262.

It belongs to the inositol monophosphatase superfamily.

Part of the qa gene cluster that mediates the catabolism of quinic acid (QA) and as such, allows the use of QA as a sole carbon source. Its function within the pathway has not been determined yet but it probably plays a regulatory role. The qa cluster encodes 3 inducible enymes (qa-2, qa-3 and qa-4) catalyzing the first three reactions in the catabolism of quinic acid to protocatechuic acid (also known as 3,4-Dihydroxybenzoic acid). The protein is Quinic acid degradation cluster protein x of Neurospora crassa (strain ATCC 24698 / 74-OR23-1A / CBS 708.71 / DSM 1257 / FGSC 987).